A 334-amino-acid chain; its full sequence is Glycerol-3-phosphate dehydrogenase [NAD(P)+] (334 aa).

Residues S14, Y15, H35, and K109 each contribute to the NADPH site. The sn-glycerol 3-phosphate site is built by K109, G138, and T140. An NADPH-binding site is contributed by A142. Sn-glycerol 3-phosphate contacts are provided by K194, D247, S257, R258, and N259. The Proton acceptor role is filled by K194. Position 258 (R258) interacts with NADPH. V282 and E284 together coordinate NADPH.

Belongs to the NAD-dependent glycerol-3-phosphate dehydrogenase family.

It localises to the cytoplasm. It catalyses the reaction sn-glycerol 3-phosphate + NAD(+) = dihydroxyacetone phosphate + NADH + H(+). It carries out the reaction sn-glycerol 3-phosphate + NADP(+) = dihydroxyacetone phosphate + NADPH + H(+). It participates in membrane lipid metabolism; glycerophospholipid metabolism. In terms of biological role, catalyzes the reduction of the glycolytic intermediate dihydroxyacetone phosphate (DHAP) to sn-glycerol 3-phosphate (G3P), the key precursor for phospholipid synthesis. The polypeptide is Glycerol-3-phosphate dehydrogenase [NAD(P)+] (Psychromonas ingrahamii (strain DSM 17664 / CCUG 51855 / 37)).